Reading from the N-terminus, the 432-residue chain is MAVIESVYARQILDSRGNPTVQVVLDTEDGAQGLGLVPSGASTGEAEAWERRDGDKSVYGGKGVLNAVKAVNEVIAPKVIGMDAADQRALDDLMIELDGTPNKGKLGANAILGVSLAALYASAESAGLPLYRYIGGTNGHILPVPNMNIMNGGAHADFATDIQEYMISPYGFDTYSEALRAGVEVYHTLKNVLKKEGLNTGLGDEGGFAPKMKSNEDSLKYIMDAISAAGYEPGKQIGICLDVASSEFYNKETGKYRFDGEERDSAYMLDYYENLINEYPIVSIEDPFNEEGWEDWAAITARLGDRLQFVGDDLLVTNPARLQKAIDLGAANSLLVKLNQIGSVTETLDAIELATANGYTSMVSHRSGETPDTTISDLAVAKNTRQIKTGAPARGERVAKYNRLLEIEEELGSTAQYAGYSAFKACKKYLAK.

Gln163 lines the (2R)-2-phosphoglycerate pocket. Glu205 acts as the Proton donor in catalysis. Mg(2+) contacts are provided by Asp242, Glu285, and Asp312. 4 residues coordinate (2R)-2-phosphoglycerate: Lys337, Arg366, Ser367, and Lys388. Lys337 acts as the Proton acceptor in catalysis.

Belongs to the enolase family. Mg(2+) serves as cofactor.

Its subcellular location is the cytoplasm. The protein resides in the secreted. The protein localises to the cell surface. It carries out the reaction (2R)-2-phosphoglycerate = phosphoenolpyruvate + H2O. The protein operates within carbohydrate degradation; glycolysis; pyruvate from D-glyceraldehyde 3-phosphate: step 4/5. In terms of biological role, catalyzes the reversible conversion of 2-phosphoglycerate (2-PG) into phosphoenolpyruvate (PEP). It is essential for the degradation of carbohydrates via glycolysis. This Bifidobacterium longum (strain DJO10A) protein is Enolase.